We begin with the raw amino-acid sequence, 347 residues long: Olfactory receptor 2M2 (347 aa).

Topologically, residues 1–25 (MAWENQTFNSDFILLGIFNHSPPHT) are extracellular. N-linked (GlcNAc...) asparagine glycosylation occurs at Asn5. A helical membrane pass occupies residues 26–49 (FLFFLVLGIFLVAFMGNSVMVLLI). Residues 50–57 (YLDTQLHT) are Cytoplasmic-facing. A helical membrane pass occupies residues 58–79 (PMYFLLSQLSLMDLMLICTTVP). Over 80–100 (KMAFNYLSGSKSISMAGCVTQ) the chain is Extracellular. A disulfide bridge connects residues Cys97 and Cys189. A helical membrane pass occupies residues 101 to 120 (IFFYISLSGSECFLLAVMAY). Topologically, residues 121–139 (DRYIAICHPLRYTNLMNPK) are cytoplasmic. A helical membrane pass occupies residues 140–158 (ICGLMATFSWILGSTDGII). Residues 159–195 (DAVATFSFSFCGSREIAHFFCEFPSLLILSCNDTSIF) are Extracellular-facing. Residue Asn190 is glycosylated (N-linked (GlcNAc...) asparagine). The chain crosses the membrane as a helical span at residues 196–219 (EEVIFICCIVMLVFPVAIIIASYA). Topologically, residues 220–236 (RVILAVIHMGSGEGRCK) are cytoplasmic. Residues 237-259 (AFTTCSSHLMVVGMYYGAALFMY) traverse the membrane as a helical segment. Residues 260–272 (IRPTSDHSPTQDK) are Extracellular-facing. The chain crosses the membrane as a helical span at residues 273 to 292 (MVSVFYTILTPMLNPLIYSL). At 293-347 (RNKEVTRAFMKILGKGKSESELPHKLYVLLFAKFFFLISIFFYDVKILALIMYIA) the chain is on the cytoplasmic side.

It belongs to the G-protein coupled receptor 1 family.

The protein resides in the cell membrane. Functionally, odorant receptor. This is Olfactory receptor 2M2 (OR2M2) from Homo sapiens (Human).